Consider the following 470-residue polypeptide: Membrane-bound lytic murein transglycosylase F (470 aa).

The signal sequence occupies residues 1-21 (MLKEKLIIIITLVMLLCACDI). Residues 22–259 (QEQSTQLAQI…VLEEKYFGHV (238 aa)) form a non-LT domain region. The segment at 260 to 470 (RQFNYVNTLA…PKIGDEVEAK (211 aa)) is LT domain. Glu304 is a catalytic residue.

The protein in the N-terminal section; belongs to the bacterial solute-binding protein 3 family. This sequence in the C-terminal section; belongs to the transglycosylase Slt family.

The protein resides in the cell outer membrane. It catalyses the reaction Exolytic cleavage of the (1-&gt;4)-beta-glycosidic linkage between N-acetylmuramic acid (MurNAc) and N-acetylglucosamine (GlcNAc) residues in peptidoglycan, from either the reducing or the non-reducing ends of the peptidoglycan chains, with concomitant formation of a 1,6-anhydrobond in the MurNAc residue.. Functionally, murein-degrading enzyme that degrades murein glycan strands and insoluble, high-molecular weight murein sacculi, with the concomitant formation of a 1,6-anhydromuramoyl product. Lytic transglycosylases (LTs) play an integral role in the metabolism of the peptidoglycan (PG) sacculus. Their lytic action creates space within the PG sacculus to allow for its expansion as well as for the insertion of various structures such as secretion systems and flagella. The protein is Membrane-bound lytic murein transglycosylase F of Pseudoalteromonas translucida (strain TAC 125).